The primary structure comprises 141 residues: Hemoglobin subunit zeta (141 aa).

Position 1 is an N-acetylserine (Ser-1). A Globin domain is found at 1-141 (SLTKAERTII…VSGVLTEKYR (141 aa)). The residue at position 28 (Thr-28) is a Phosphothreonine. Phosphoserine is present on Ser-52. His-58 provides a ligand contact to heme b. At Ser-72 the chain carries Phosphoserine. Residue His-87 participates in heme b binding.

This sequence belongs to the globin family. Heterotetramer of two zeta chains and two epsilon chains.

Its function is as follows. The zeta chain is an alpha-type chain of mammalian embryonic hemoglobin. The sequence is that of Hemoglobin subunit zeta from Sus scrofa (Pig).